The primary structure comprises 347 residues: MSVMFDPQAAIYPFPPKPTPLNDDEKQFYREKIKRLLKERNAVMVAHYYTDPEIQQLAEETGGCISDSLEMARFGAKHAASTLLVAGVRFMGETAKILSPEKNILMPTLAAECSLDLGCPIDEFSAFCDAHPDRTVVVYANTSAAVKARADWVVTSSIAVELIEHLDSLGEKIIWAPDRHLGNYVQKQTGADVLCWQGACIVHDEFKTQALTRLKKIYPDAALLVHPESPQSIVEMADAVGSTSQLIKAAKTLPHRQLIVATDRGIFYKMQQAVPEKELLEAPTAGEGATCRSCAHCPWMAMNGLKAIAEGLEQGGAAHEIQVDAALREGALLPLNRMLDFAATLRA.

The iminosuccinate site is built by His-47 and Ser-68. Cys-113 contacts [4Fe-4S] cluster. Residues 139–141 (YAN) and Ser-156 each bind iminosuccinate. Position 200 (Cys-200) interacts with [4Fe-4S] cluster. Iminosuccinate-binding positions include 226 to 228 (HPE) and Thr-243. Residue Cys-297 participates in [4Fe-4S] cluster binding.

The protein belongs to the quinolinate synthase family. Type 1 subfamily. The cofactor is [4Fe-4S] cluster.

It is found in the cytoplasm. It catalyses the reaction iminosuccinate + dihydroxyacetone phosphate = quinolinate + phosphate + 2 H2O + H(+). It participates in cofactor biosynthesis; NAD(+) biosynthesis; quinolinate from iminoaspartate: step 1/1. Functionally, catalyzes the condensation of iminoaspartate with dihydroxyacetone phosphate to form quinolinate. In Salmonella paratyphi A (strain ATCC 9150 / SARB42), this protein is Quinolinate synthase.